The primary structure comprises 905 residues: MKGCSSYLMYSFGGLLSLWILLVSSTNQCTVRYNVADCSHLKLTHIPDDLPSNITVLNLTHNQLRRLPPTNFTRYSQLAILDAGFNSISKLEPELCQILPLLKVLNLQHNELSQISDQTFVFCTNLTELDLMSNSIHKIKSNPFKNQKNLIKLDLSHNGLSSTKLGTGVQLENLQELLLAKNKILALRSEELEFLGNSSLRKLDLSSNPLKEFSPGCFQTIGKLFALLLNNAQLNPHLTEKLCWELSNTSIQNLSLANNQLLATSESTFSGLKWTNLTQLDLSYNNLHDVGNGSFSYLPSLRYLSLEYNNIQRLSPRSFYGLSNLRYLSLKRAFTKQSVSLASHPNIDDFSFQWLKYLEYLNMDDNNIPSTKSNTFTGLVSLKYLSLSKTFTSLQTLTNETFVSLAHSPLLTLNLTKNHISKIANGTFSWLGQLRILDLGLNEIEQKLSGQEWRGLRNIFEIYLSYNKYLQLSTSSFALVPSLQRLMLRRVALKNVDISPSPFRPLRNLTILDLSNNNIANINEDLLEGLENLEILDFQHNNLARLWKRANPGGPVNFLKGLSHLHILNLESNGLDEIPVGVFKNLFELKSINLGLNNLNKLEPFIFDDQTSLRSLNLQKNLITSVEKDVFGPPFQNLNSLDMRFNPFDCTCESISWFVNWINQTHTNISELSTHYLCNTPHHYYGFPLKLFDTSSCKDSAPFELLFIISTSMLLVFILVVLLIHIEGWRISFYWNVSVHRILGFKEIDTQAEQFEYTAYIIHAHKDRDWVWEHFSPMEEQDQSLKFCLEERDFEAGVLGLEAIVNSIKRSRKIIFVITHHLLKDPLCRRFKVHHAVQQAIEQNLDSIILIFLQNIPDYKLNHALCLRRGMFKSHCILNWPVQKERINAFHHKLQVALGSRNSAH.

The first 25 residues, 1–25, serve as a signal peptide directing secretion; the sequence is MKGCSSYLMYSFGGLLSLWILLVSS. The region spanning 26 to 52 is the LRRNT domain; sequence TNQCTVRYNVADCSHLKLTHIPDDLPS. The Lumenal segment spans residues 26–705; sequence TNQCTVRYNV…SCKDSAPFEL (680 aa). Cysteines 29 and 38 form a disulfide. N-linked (GlcNAc...) asparagine glycans are attached at residues Asn-53, Asn-58, and Asn-71. LRR repeat units lie at residues 53 to 74, 77 to 98, 101 to 122, 125 to 146, 149 to 170, and 173 to 196; these read NITV…NFTR, QLAI…LCQI, LLKV…TFVF, NLTE…PFKN, NLIK…TGVQ, and NLQE…EFLG. Residues Cys-96 and Cys-123 are joined by a disulfide bond. N-linked (GlcNAc...) asparagine glycosylation occurs at Asn-125. N-linked (GlcNAc...) asparagine glycosylation occurs at Asn-197. An LRR 7 repeat occupies 199-220; it reads SLRKLDLSSNPLKEFSPGCFQT. N-linked (GlcNAc...) asparagine glycosylation is found at Asn-248, Asn-253, Asn-276, and Asn-292. LRR repeat units follow at residues 250–271, 276–297, 300–321, 324–345, 357–378, 381–401, 409–430, 433–454, 458–479, 482–502, 508–529, 532–553, 564–585, 588–609, and 612–633; these read SIQN…TFSG, NLTQ…SFSY, SLRY…SFYG, NLRY…ASHP, YLEY…TFTG, SLKY…TNET, PLLT…TFSW, QLRI…QEWR, NIFE…SFAL, SLQR…SPSP, NLTI…LLEG, NLEI…ANPG, HLHI…VFKN, ELKS…IFDD, and SLRS…VFGP. N-linked (GlcNAc...) asparagine glycans are attached at residues Asn-399, Asn-414, and Asn-425. Asn-508 is a glycosylation site (N-linked (GlcNAc...) asparagine). In terms of domain architecture, LRRCT spans 646-699; it reads NPFDCTCESISWFVNWINQTHTNISELSTHYLCNTPHHYYGFPLKLFDTSSCKD. Intrachain disulfides connect Cys-650/Cys-678 and Cys-652/Cys-697. 2 N-linked (GlcNAc...) asparagine glycosylation sites follow: Asn-663 and Asn-668. A helical membrane pass occupies residues 706–726; that stretch reads LFIISTSMLLVFILVVLLIHI. Topologically, residues 727–905 are cytoplasmic; the sequence is EGWRISFYWN…VALGSRNSAH (179 aa). In terms of domain architecture, TIR spans 755-898; sequence FEYTAYIIHA…AFHHKLQVAL (144 aa). At Tyr-760 the chain carries Phosphotyrosine. Glycyl lysine isopeptide (Lys-Gly) (interchain with G-Cter in ubiquitin) cross-links involve residues Lys-766, Lys-813, and Lys-832. Tyr-859 bears the Phosphotyrosine mark.

The protein belongs to the Toll-like receptor family. Monomer and homodimer; dimerization is triggered by ligand-binding, the signaling unit is composed of one ds-RNA of around 40 bp and two TLR3 molecules, and lateral clustering of signaling units along the length of the ds-RNA ligand is required for TLR3 signal transduction. Interacts (via transmembrane domain) with UNC93B1; the interaction is required for transport from the ER to the endosomes. Interacts with SRC; upon binding of double-stranded RNA. Interacts with TICAM1 (via the TIR domain) in response to poly(I:C) and this interaction is enhanced in the presence of WDFY1. The tyrosine-phosphorylated form (via TIR domain) interacts with WDFY1 (via WD repeat 2) in response to poly(I:C). Ubiquitinated by RNF170 at Lys-766 via 'Lys-48'-linked ubiquitin chains; leading to TLR3 proteasomal degradation. TLR3 signaling requires a proteolytic cleavage mediated by cathepsins CTSB and CTSH, the cleavage occurs between amino acids 252 and 346. The cleaved form of TLR3 is the predominant form found in endosomes. Post-translationally, ubiquitinated by TRIM3; leading to recognition and sorting of polyubiquitinated TLR3 by the ESCRT complexes. Ubiquitinated by ZNRF1 via 'Lys-63'-linked ubiquitin chains; leading to TLR3 lysosomal trafficking and degradation. In terms of tissue distribution, highly expressed in lung. After intraperitoneal injection of lipopolysaccharide, highly expressed in brain, heart, kidney, liver, lung and spleen.

It localises to the endoplasmic reticulum membrane. The protein resides in the endosome membrane. Its subcellular location is the early endosome. In terms of biological role, key component of innate and adaptive immunity. TLRs (Toll-like receptors) control host immune response against pathogens through recognition of molecular patterns specific to microorganisms. TLR3 is a nucleotide-sensing TLR which is activated by double-stranded RNA, a sign of viral infection. Acts via the adapter TRIF/TICAM1, leading to NF-kappa-B activation, IRF3 nuclear translocation, cytokine secretion and the inflammatory response. The protein is Toll-like receptor 3 of Mus musculus (Mouse).